Here is a 467-residue protein sequence, read N- to C-terminus: Glutamate--tRNA ligase 1 (467 aa).

A 'HIGH' region motif is present at residues 8–18 (PSPTGHLHVGG). Positions 230–234 (PLSKR) match the 'KMSKS' region motif. Lys-233 contacts ATP.

This sequence belongs to the class-I aminoacyl-tRNA synthetase family. Glutamate--tRNA ligase type 1 subfamily. As to quaternary structure, monomer.

The protein localises to the cytoplasm. The enzyme catalyses tRNA(Glu) + L-glutamate + ATP = L-glutamyl-tRNA(Glu) + AMP + diphosphate. Its function is as follows. Catalyzes the attachment of glutamate to tRNA(Glu) in a two-step reaction: glutamate is first activated by ATP to form Glu-AMP and then transferred to the acceptor end of tRNA(Glu). This Petrotoga mobilis (strain DSM 10674 / SJ95) protein is Glutamate--tRNA ligase 1.